Consider the following 382-residue polypeptide: MSSPETHSDVIELTRELISRPSVTPLDEGCQDLMAKRLAAIGFTIEPMVFEDTTNLWARRGTEGPVFCFAGHTDVVPVGDLNRWHTPPFDPVVIDGYIHGRGAADMKGSLAAMVVAAERFVAEHPDHQGSIAFLITSDEEGPFINGTVRVVETLEARHEKITWALVGEPSSTHLLGDVVKNGRRGSLTGNLTVKGIQGHVAYPHLADNPIHRAAPALAELSRIEWDKGNEFFPPTSFQIANINGGTGASNVIPGELKVMFNFRYSTEVTAETLIARVLGILDAHGLDYDIDWVFNGLPFLTGEGPLLDATREAIFEVTGTHTDPQTTGGTSDGRFIAPTGAQVIELGPVNATIHKVNECVKASDLELLTGCYQRILEKLLCN.

His72 contributes to the Zn(2+) binding site. Asp74 is an active-site residue. Asp105 is a Zn(2+) binding site. The Proton acceptor role is filled by Glu139. Residues Glu140, Glu168, and His354 each coordinate Zn(2+).

Belongs to the peptidase M20A family. DapE subfamily. As to quaternary structure, homodimer. Requires Zn(2+) as cofactor. The cofactor is Co(2+).

The enzyme catalyses N-succinyl-(2S,6S)-2,6-diaminopimelate + H2O = (2S,6S)-2,6-diaminopimelate + succinate. It participates in amino-acid biosynthesis; L-lysine biosynthesis via DAP pathway; LL-2,6-diaminopimelate from (S)-tetrahydrodipicolinate (succinylase route): step 3/3. In terms of biological role, catalyzes the hydrolysis of N-succinyl-L,L-diaminopimelic acid (SDAP), forming succinate and LL-2,6-diaminopimelate (DAP), an intermediate involved in the bacterial biosynthesis of lysine and meso-diaminopimelic acid, an essential component of bacterial cell walls. This Shewanella amazonensis (strain ATCC BAA-1098 / SB2B) protein is Succinyl-diaminopimelate desuccinylase.